A 233-amino-acid chain; its full sequence is Leucyl/phenylalanyl-tRNA--protein transferase (233 aa).

This sequence belongs to the L/F-transferase family.

Its subcellular location is the cytoplasm. The catalysed reaction is N-terminal L-lysyl-[protein] + L-leucyl-tRNA(Leu) = N-terminal L-leucyl-L-lysyl-[protein] + tRNA(Leu) + H(+). It carries out the reaction N-terminal L-arginyl-[protein] + L-leucyl-tRNA(Leu) = N-terminal L-leucyl-L-arginyl-[protein] + tRNA(Leu) + H(+). It catalyses the reaction L-phenylalanyl-tRNA(Phe) + an N-terminal L-alpha-aminoacyl-[protein] = an N-terminal L-phenylalanyl-L-alpha-aminoacyl-[protein] + tRNA(Phe). Its function is as follows. Functions in the N-end rule pathway of protein degradation where it conjugates Leu, Phe and, less efficiently, Met from aminoacyl-tRNAs to the N-termini of proteins containing an N-terminal arginine or lysine. In Klebsiella pneumoniae subsp. pneumoniae (strain ATCC 700721 / MGH 78578), this protein is Leucyl/phenylalanyl-tRNA--protein transferase.